The chain runs to 633 residues: Kinesin-like motor protein 9 (633 aa).

In terms of domain architecture, Kinesin motor spans 1-392; sequence MIQIFLRVKK…MRYSANAREI (392 aa). 94–101 is an ATP binding site; that stretch reads GVSGAGKT. Disordered regions lie at residues 393–423, 531–556, and 575–633; these read LPPP…TKAL, LEEE…SRKL, and KLWP…INEL. Residues 398–423 are compositionally biased toward polar residues; the sequence is NENSGSQSPSHSLLQKSKNTSSTKAL. A coiled-coil region spans residues 417 to 541; sequence TSSTKALTSH…EEESIKESSA (125 aa). Over residues 578–587 the composition is skewed to polar residues; that stretch reads PQSTLIQAPN. Residues 604–623 show a composition bias toward low complexity; it reads VSPIKPLSPSRRPPLTSLYS. Phosphoserine is present on residues Ser-605, Ser-611, and Ser-613. The segment covering 624-633 has biased composition (polar residues); that stretch reads GTTDIDINEL.

The protein belongs to the TRAFAC class myosin-kinesin ATPase superfamily. Kinesin family. Interacts with ase1. Phosphorylated by cdc2 and dephosphorylated by clp1. Dephosphorylation is required for the interaction with ase1.

The protein localises to the nucleus. It localises to the cytoplasm. It is found in the cytoskeleton. The protein resides in the microtubule organizing center. Its subcellular location is the spindle pole body. Its function is as follows. Kinesin-like motor protein involved in anaphase B spindle elongation. The chain is Kinesin-like motor protein 9 (klp9) from Schizosaccharomyces pombe (strain 972 / ATCC 24843) (Fission yeast).